The following is a 267-amino-acid chain: uncharacterized protein (267 aa).

The WD repeat unit spans residues 50–90 (PGLNAVTASKFSPDGRWLLNIADGSGYVQLWDTAKGERVKT).

This is an uncharacterized protein from Deinococcus radiodurans (strain ATCC 13939 / DSM 20539 / JCM 16871 / CCUG 27074 / LMG 4051 / NBRC 15346 / NCIMB 9279 / VKM B-1422 / R1).